We begin with the raw amino-acid sequence, 451 residues long: Lysine histidine transporter-like 3 (451 aa).

Residues 1-40 lie on the Cytoplasmic side of the membrane; the sequence is MKGIPSSSNQILNQDLVEDQSFELEDWLPITASRNANWYY. The helical transmembrane segment at 41–61 threads the bilayer; that stretch reads SAFHNVTAIVGAGVLGLPYAM. The Extracellular portion of the chain corresponds to 62-63; it reads SE. The chain crosses the membrane as a helical span at residues 64–84; the sequence is LGWGPGVVVLILSWVITLYTF. Residues 85–115 lie on the Cytoplasmic side of the membrane; it reads WQMIEMHEMFEGKRFDRYHELGQAAFGKKLG. Residues 116–136 form a helical membrane-spanning segment; it reads LYIVVPLQLLVETSACIVYMV. The Extracellular portion of the chain corresponds to 137–159; the sequence is TGGESLKKIHQLSVGDYECRKLK. Residues 160–177 form a helical membrane-spanning segment; sequence VRHFILIFASSQFVLSLL. Residues 178 to 182 are Cytoplasmic-facing; it reads KNFNS. A helical membrane pass occupies residues 183–203; it reads ISGVSLVAAVMSMSYSTIAWV. The Extracellular segment spans residues 204-227; the sequence is ASLTKGVANNVEYGYKRRNNTSVP. A helical transmembrane segment spans residues 228 to 248; the sequence is LAFLGALGEMAFAYAGHNVVL. Over 249 to 269 the chain is Cytoplasmic; that stretch reads EIQATIPSTPENPSKRPMWKG. Residues 270–290 traverse the membrane as a helical segment; that stretch reads AIVAYIIVAFCYFPVALVGFW. Topologically, residues 291 to 309 are extracellular; sequence TFGNNVEENILKTLRGPKG. A helical membrane pass occupies residues 310–330; it reads LIIVANIFVIIHLMGSYQVYA. The Cytoplasmic portion of the chain corresponds to 331–358; sequence MPVFDMIESVMIKKWHFSPTRVLRFTIR. A helical transmembrane segment spans residues 359-379; it reads WTFVAATMGIAVALPHFSALL. Serine 380 is a topological domain (extracellular). Residues 381 to 401 traverse the membrane as a helical segment; that stretch reads FFGGFIFAPTTYFIPCIIWLI. The Cytoplasmic portion of the chain corresponds to 402–413; that stretch reads LKKPKRFSLSWC. Residues 414–434 form a helical membrane-spanning segment; sequence INWICIILGVLVMIIAPIGGL. At 435 to 451 the chain is on the extracellular side; sequence AKLMNALKQPDSSCKST.

This sequence belongs to the amino acid/polyamine transporter 2 family. Amino acid/auxin permease (AAAP) (TC 2.A.18.2) subfamily.

The protein localises to the cell membrane. In terms of biological role, amino acid transporter. This chain is Lysine histidine transporter-like 3, found in Arabidopsis thaliana (Mouse-ear cress).